A 62-amino-acid chain; its full sequence is Large ribosomal subunit protein bL28 (62 aa).

It belongs to the bacterial ribosomal protein bL28 family.

In Clostridioides difficile (strain 630) (Peptoclostridium difficile), this protein is Large ribosomal subunit protein bL28.